The primary structure comprises 434 residues: 3-phosphoshikimate 1-carboxyvinyltransferase (434 aa).

The 3-phosphoshikimate site is built by K22, S23, and R27. Residue K22 coordinates phosphoenolpyruvate. Phosphoenolpyruvate is bound by residues G93 and R121. Residues S168, S169, Q170, S199, D320, and K347 each contribute to the 3-phosphoshikimate site. Q170 is a phosphoenolpyruvate binding site. Catalysis depends on D320, which acts as the Proton acceptor. Positions 351, 394, and 419 each coordinate phosphoenolpyruvate.

The protein belongs to the EPSP synthase family. As to quaternary structure, monomer.

The protein resides in the cytoplasm. The enzyme catalyses 3-phosphoshikimate + phosphoenolpyruvate = 5-O-(1-carboxyvinyl)-3-phosphoshikimate + phosphate. The protein operates within metabolic intermediate biosynthesis; chorismate biosynthesis; chorismate from D-erythrose 4-phosphate and phosphoenolpyruvate: step 6/7. Functionally, catalyzes the transfer of the enolpyruvyl moiety of phosphoenolpyruvate (PEP) to the 5-hydroxyl of shikimate-3-phosphate (S3P) to produce enolpyruvyl shikimate-3-phosphate and inorganic phosphate. The protein is 3-phosphoshikimate 1-carboxyvinyltransferase of Paraburkholderia phytofirmans (strain DSM 17436 / LMG 22146 / PsJN) (Burkholderia phytofirmans).